We begin with the raw amino-acid sequence, 225 residues long: Small ribosomal subunit protein uS7 (225 aa).

Belongs to the universal ribosomal protein uS7 family. In terms of assembly, component of the small ribosomal subunit. Mature ribosomes consist of a small (40S) and a large (60S) subunit. The 40S subunit contains about 32 different proteins and 1 molecule of RNA (18S). The 60S subunit contains 45 different proteins and 3 molecules of RNA (25S, 5.8S and 5S).

The protein resides in the cytoplasm. Its function is as follows. Component of the ribosome, a large ribonucleoprotein complex responsible for the synthesis of proteins in the cell. The small ribosomal subunit (SSU) binds messenger RNAs (mRNAs) and translates the encoded message by selecting cognate aminoacyl-transfer RNA (tRNA) molecules. The large subunit (LSU) contains the ribosomal catalytic site termed the peptidyl transferase center (PTC), which catalyzes the formation of peptide bonds, thereby polymerizing the amino acids delivered by tRNAs into a polypeptide chain. The nascent polypeptides leave the ribosome through a tunnel in the LSU and interact with protein factors that function in enzymatic processing, targeting, and the membrane insertion of nascent chains at the exit of the ribosomal tunnel. The protein is Small ribosomal subunit protein uS7 (RPS5) of Candida albicans (strain SC5314 / ATCC MYA-2876) (Yeast).